The following is a 713-amino-acid chain: Polyribonucleotide nucleotidyltransferase (713 aa).

Positions 493 and 499 each coordinate Mg(2+). The KH domain maps to 560 to 619; sequence PRMITIKINPEKIRDVIGKGGSVIRALTEETGTTIDISDDGVVTIASTNSEGMAEAKKRI. One can recognise an S1 motif domain in the interval 629 to 697; sequence GHVYEGTVLK…EKGRVRLSAK (69 aa).

Belongs to the polyribonucleotide nucleotidyltransferase family. The cofactor is Mg(2+).

It is found in the cytoplasm. The catalysed reaction is RNA(n+1) + phosphate = RNA(n) + a ribonucleoside 5'-diphosphate. Functionally, involved in mRNA degradation. Catalyzes the phosphorolysis of single-stranded polyribonucleotides processively in the 3'- to 5'-direction. This Burkholderia mallei (strain NCTC 10247) protein is Polyribonucleotide nucleotidyltransferase.